The following is a 386-amino-acid chain: 4-hydroxy-3-methylbut-2-en-1-yl diphosphate synthase (flavodoxin) (386 aa).

[4Fe-4S] cluster is bound by residues Cys-281, Cys-284, Cys-316, and Glu-323.

It belongs to the IspG family. It depends on [4Fe-4S] cluster as a cofactor.

The catalysed reaction is (2E)-4-hydroxy-3-methylbut-2-enyl diphosphate + oxidized [flavodoxin] + H2O + 2 H(+) = 2-C-methyl-D-erythritol 2,4-cyclic diphosphate + reduced [flavodoxin]. The protein operates within isoprenoid biosynthesis; isopentenyl diphosphate biosynthesis via DXP pathway; isopentenyl diphosphate from 1-deoxy-D-xylulose 5-phosphate: step 5/6. Converts 2C-methyl-D-erythritol 2,4-cyclodiphosphate (ME-2,4cPP) into 1-hydroxy-2-methyl-2-(E)-butenyl 4-diphosphate. The chain is 4-hydroxy-3-methylbut-2-en-1-yl diphosphate synthase (flavodoxin) from Corynebacterium jeikeium (strain K411).